The following is a 350-amino-acid chain: Protein Wnt-2 (350 aa).

A signal peptide spans 1–25; it reads MNFLPNGICFYLSVAICWFSSRVDA. Cystine bridges form between C74/C85, C125/C133, C135/C155, C204/C218, C206/C213, C276/C307, C292/C302, C306/C346, C322/C337, C324/C334, and C329/C330. N-linked (GlcNAc...) asparagine glycosylation occurs at N132. A lipid anchor (O-palmitoleoyl serine; by PORCN) is attached at S210. The N-linked (GlcNAc...) asparagine glycan is linked to N293.

It belongs to the Wnt family. Post-translationally, palmitoleoylation is required for efficient binding to frizzled receptors. Depalmitoleoylation leads to Wnt signaling pathway inhibition.

It localises to the secreted. It is found in the extracellular space. The protein resides in the extracellular matrix. Its function is as follows. Ligand for members of the frizzled family of seven transmembrane receptors. Functions in the canonical Wnt signaling pathway that results in activation of transcription factors of the TCF/LEF family. This is Protein Wnt-2 (wnt2) from Danio rerio (Zebrafish).